We begin with the raw amino-acid sequence, 301 residues long: Probable alpha-L-glutamate ligase 1 (301 aa).

An ATP-grasp domain is found at 104–287; that stretch reads MQLMSRRGIG…VAGAIIAFIE (184 aa). Residues Lys141, 178–179, Asp187, and 211–213 each bind ATP; these read EY and RSN. Mg(2+) is bound by residues Asp248, Glu260, and Asn262. Mn(2+) contacts are provided by Asp248, Glu260, and Asn262.

Belongs to the RimK family. Requires Mg(2+) as cofactor. Mn(2+) serves as cofactor.

This chain is Probable alpha-L-glutamate ligase 1, found in Shewanella amazonensis (strain ATCC BAA-1098 / SB2B).